Here is a 70-residue protein sequence, read N- to C-terminus: Cytochrome c oxidase subunit 8B, mitochondrial (70 aa).

The N-terminal 24 residues, M1–R24, are a transit peptide targeting the mitochondrion. Over I25–S35 the chain is Mitochondrial matrix. Residues A36 to S59 form a helical membrane-spanning segment. The Mitochondrial intermembrane portion of the chain corresponds to H60 to A70.

This sequence belongs to the cytochrome c oxidase VIII family. As to quaternary structure, component of the cytochrome c oxidase (complex IV, CIV), a multisubunit enzyme composed of 14 subunits. The complex is composed of a catalytic core of 3 subunits MT-CO1, MT-CO2 and MT-CO3, encoded in the mitochondrial DNA, and 11 supernumerary subunits COX4I, COX5A, COX5B, COX6A, COX6B, COX6C, COX7A, COX7B, COX7C, COX8 and NDUFA4, which are encoded in the nuclear genome. The complex exists as a monomer or a dimer and forms supercomplexes (SCs) in the inner mitochondrial membrane with NADH-ubiquinone oxidoreductase (complex I, CI) and ubiquinol-cytochrome c oxidoreductase (cytochrome b-c1 complex, complex III, CIII), resulting in different assemblies (supercomplex SCI(1)III(2)IV(1) and megacomplex MCI(2)III(2)IV(2)).

The protein localises to the mitochondrion inner membrane. Its pathway is energy metabolism; oxidative phosphorylation. Its function is as follows. Component of the cytochrome c oxidase, the last enzyme in the mitochondrial electron transport chain which drives oxidative phosphorylation. The respiratory chain contains 3 multisubunit complexes succinate dehydrogenase (complex II, CII), ubiquinol-cytochrome c oxidoreductase (cytochrome b-c1 complex, complex III, CIII) and cytochrome c oxidase (complex IV, CIV), that cooperate to transfer electrons derived from NADH and succinate to molecular oxygen, creating an electrochemical gradient over the inner membrane that drives transmembrane transport and the ATP synthase. Cytochrome c oxidase is the component of the respiratory chain that catalyzes the reduction of oxygen to water. Electrons originating from reduced cytochrome c in the intermembrane space (IMS) are transferred via the dinuclear copper A center (CU(A)) of subunit 2 and heme A of subunit 1 to the active site in subunit 1, a binuclear center (BNC) formed by heme A3 and copper B (CU(B)). The BNC reduces molecular oxygen to 2 water molecules using 4 electrons from cytochrome c in the IMS and 4 protons from the mitochondrial matrix. The chain is Cytochrome c oxidase subunit 8B, mitochondrial (Cox8b) from Rattus norvegicus (Rat).